The chain runs to 393 residues: Proteasome-activating nucleotidase (393 aa).

Residues 14–53 are a coiled coil; sequence SDEVQLVRLLEEKIKSLQIEIENLRKELNYYKAEMEKMLS. ATP-binding positions include 178–183 and Y317; that span reads GTGKTM. A docks into pockets in the proteasome alpha-ring to cause gate opening region spans residues 391 to 393; the sequence is KYS.

It belongs to the AAA ATPase family. In terms of assembly, homohexamer. The hexameric complex has a two-ring architecture resembling a top hat that caps the 20S proteasome core at one or both ends. Upon ATP-binding, the C-terminus of PAN interacts with the alpha-rings of the proteasome core by binding to the intersubunit pockets.

The protein localises to the cytoplasm. In terms of biological role, ATPase which is responsible for recognizing, binding, unfolding and translocation of substrate proteins into the archaeal 20S proteasome core particle. Is essential for opening the gate of the 20S proteasome via an interaction with its C-terminus, thereby allowing substrate entry and access to the site of proteolysis. Thus, the C-termini of the proteasomal ATPase function like a 'key in a lock' to induce gate opening and therefore regulate proteolysis. Unfolding activity requires energy from ATP hydrolysis, whereas ATP binding alone promotes ATPase-20S proteasome association which triggers gate opening, and supports translocation of unfolded substrates. This chain is Proteasome-activating nucleotidase, found in Saccharolobus islandicus (strain Y.N.15.51 / Yellowstone #2) (Sulfolobus islandicus).